A 298-amino-acid polypeptide reads, in one-letter code: Probable tRNA(His) guanylyltransferase (298 aa).

3 residues coordinate Mg(2+): D58, G59, and D105. Residues 58 to 63 (DGRNFH) and 104 to 105 (SD) each bind GTP.

The protein belongs to the tRNA(His) guanylyltransferase family. As to quaternary structure, homotetramer. Interacts with MFN1 and MFN2; functions as a guanyl-nucleotide exchange factor/GEF for MFN2 and also probably MFN1. The cofactor is Mg(2+).

It is found in the cytoplasm. It localises to the mitochondrion. The catalysed reaction is a 5'-end ribonucleotide-tRNA(His) + GTP + ATP + H2O = a 5'-end phospho-guanosine-ribonucleotide-tRNA(His) + AMP + 2 diphosphate + H(+). In terms of biological role, adds a GMP to the 5'-end of tRNA(His) after transcription and RNase P cleavage. This step is essential for proper recognition of the tRNA and for the fidelity of protein synthesis. Also functions as a guanyl-nucleotide exchange factor/GEF for the MFN1 and MFN2 mitofusins thereby regulating mitochondrial fusion. By regulating both mitochondrial dynamics and bioenergetic function, it contributes to cell survival following oxidative stress. The polypeptide is Probable tRNA(His) guanylyltransferase (THG1L) (Bos taurus (Bovine)).